A 488-amino-acid polypeptide reads, in one-letter code: Acetyl-coenzyme A carboxylase carboxyl transferase subunit beta, chloroplastic (488 aa).

The CoA carboxyltransferase N-terminal domain maps to 221 to 488; sequence LWIQCDNCYA…FFPLNKNEIK (268 aa). The Zn(2+) site is built by Cys-225, Cys-228, Cys-244, and Cys-247. A C4-type zinc finger spans residues 225 to 247; sequence CDNCYALIYKKALKLKLNVCEQC.

The protein belongs to the AccD/PCCB family. As to quaternary structure, acetyl-CoA carboxylase is a heterohexamer composed of biotin carboxyl carrier protein, biotin carboxylase and 2 subunits each of ACCase subunit alpha and ACCase plastid-coded subunit beta (accD). Zn(2+) is required as a cofactor.

It localises to the plastid. The protein resides in the chloroplast stroma. It catalyses the reaction N(6)-carboxybiotinyl-L-lysyl-[protein] + acetyl-CoA = N(6)-biotinyl-L-lysyl-[protein] + malonyl-CoA. Its pathway is lipid metabolism; malonyl-CoA biosynthesis; malonyl-CoA from acetyl-CoA: step 1/1. Functionally, component of the acetyl coenzyme A carboxylase (ACC) complex. Biotin carboxylase (BC) catalyzes the carboxylation of biotin on its carrier protein (BCCP) and then the CO(2) group is transferred by the transcarboxylase to acetyl-CoA to form malonyl-CoA. The chain is Acetyl-coenzyme A carboxylase carboxyl transferase subunit beta, chloroplastic from Aethionema grandiflorum (Persian stone-cress).